A 96-amino-acid polypeptide reads, in one-letter code: MPSNGIVRSWRRAMATMNVSLPDAMREWVEGQTQSGRYHNASEYVRDLIRRDQERADKIAHLQRLIDEGLDSGVGERSLHEIRAEARRRAGVDHEL.

Belongs to the ParD antitoxin family.

In terms of biological role, antitoxin component of a type II toxin-antitoxin (TA) system. Neutralizes the effect of cognate toxin ParE4, but no other RelE or ParE toxin. This is Antitoxin ParD4 (parD4) from Caulobacter vibrioides (strain ATCC 19089 / CIP 103742 / CB 15) (Caulobacter crescentus).